Reading from the N-terminus, the 364-residue chain is Putative galactoside 2-alpha-L-fucosyltransferase svh-11 (364 aa).

At 1–19 (MRLFHFLKFLTINNFSRYC) the chain is on the cytoplasmic side. The chain crosses the membrane as a helical; Signal-anchor for type II membrane protein span at residues 20-42 (LKIVKVHIIWITIICIIYFNWRF). At 43–364 (KKLDFMAIPY…SANSFTVVRS (322 aa)) the chain is on the lumenal side. 2 N-linked (GlcNAc...) asparagine glycosylation sites follow: Asn-60 and Asn-128.

Belongs to the glycosyltransferase 11 family.

The protein localises to the golgi apparatus. It is found in the golgi stack membrane. Mediates the transfer of fucose to the terminal galactose on glycan chains of cell surface glycoproteins and glycolipids. Required for axon regeneration after injury. This is Putative galactoside 2-alpha-L-fucosyltransferase svh-11 from Caenorhabditis elegans.